The primary structure comprises 112 residues: Protein ORF1 (112 aa).

A compositionally biased stretch (low complexity) spans 1–10 (MEGTDWSGWG). The interval 1–20 (MEGTDWSGWGDDSDFPWPKG) is disordered. Residues 51–71 (IAFVILIVSLFVLLLGVLLAC) form a helical membrane-spanning segment.

Its subcellular location is the host membrane. The protein is Protein ORF1 of Snake adenovirus serotype 1 (SnAdV-1).